The following is a 146-amino-acid chain: Angiogenin (146 aa).

The N-terminal stretch at 1 to 24 (MVMGLGLFLLVFMLGLGLTPPTLA) is a signal peptide. Q25 carries the pyrrolidone carboxylic acid modification. Residue H37 is the Proton acceptor of the active site. Residue R45 participates in tRNA binding. 3 cysteine pairs are disulfide-bonded: C50–C105, C63–C116, and C81–C131. A Nucleolar localization signal motif is present at residues 55-59 (RRRGL). C105 and I127 together coordinate tRNA. H138 (proton donor) is an active-site residue.

Belongs to the pancreatic ribonuclease family. As to quaternary structure, homodimer. Interacts with RNH1; inhibiting ANG ribonuclease activity. Interacts with PCNA.

Its subcellular location is the secreted. It is found in the nucleus. The protein resides in the nucleolus. The protein localises to the cytoplasm. It localises to the stress granule. With respect to regulation, has weak tRNA ribonuclease activity by itself due to partial autoinhibition by its C-terminus, which folds into a short alpha-helix that partially occludes the substrate-binding site. In absence of stress, the ribonuclease activity is inhibited by RNH1 in the cytoplasm. In response to stress, dissociates from RNH1 in the cytoplasm and associates with cytoplasmic ribosomes with vacant A-sites: ribosomes directly activate the tRNA ribonuclease activity of ANG by refolding the C-terminal alpha-helix. In response to stress, the angiogenic activity of ANG is inhibited by RNH1 in the nucleus. Functionally, secreted ribonuclease that can either promote or restrict cell proliferation of target cells, depending on the context. Endocytosed in target cells via its receptor PLXNB2 and translocates to the cytoplasm or nucleus. Under stress conditions, localizes to the cytoplasm and promotes the assembly of stress granules (SGs): specifically cleaves a subset of tRNAs within anticodon loops to produce tRNA-derived stress-induced fragments (tiRNAs), resulting in translation repression and inhibition of cell proliferation. tiRNas also prevent formation of apoptosome, thereby promoting cell survival. Preferentially cleaves RNAs between a pyrimidine and an adenosine residue, suggesting that it cleaves the anticodon loop of tRNA(Ala) (32-UUAGCAU-38) after positions 33 and 36. Cleaves a subset of tRNAs, including tRNA(Ala), tRNA(Glu), tRNA(Gly), tRNA(Lys), tRNA(Val), tRNA(His), tRNA(Asp) and tRNA(Sec). Under growth conditions and in differentiated cells, translocates to the nucleus and stimulates ribosomal RNA (rRNA) transcription, including that containing the initiation site sequences of 45S rRNA, thereby promoting cell growth and proliferation. Angiogenin induces vascularization of normal and malignant tissues via its ability to promote rRNA transcription. Involved in hematopoietic stem and progenitor cell (HSPC) growth and survival by promoting rRNA transcription in growth conditions and inhibiting translation in response to stress, respectively. Mediates the crosstalk between myeloid and intestinal epithelial cells to protect the intestinal epithelial barrier integrity: secreted by myeloid cells and promotes intestinal epithelial cells proliferation and survival. Also mediates osteoclast-endothelial cell crosstalk in growing bone: produced by osteoclasts and protects the neighboring vascular cells against senescence by promoting rRNA transcription. The polypeptide is Angiogenin (ANG) (Trachypithecus francoisi (Francois' leaf monkey)).